A 74-amino-acid chain; its full sequence is Exodeoxyribonuclease 7 small subunit (74 aa).

The protein belongs to the XseB family. Heterooligomer composed of large and small subunits.

It localises to the cytoplasm. It carries out the reaction Exonucleolytic cleavage in either 5'- to 3'- or 3'- to 5'-direction to yield nucleoside 5'-phosphates.. Bidirectionally degrades single-stranded DNA into large acid-insoluble oligonucleotides, which are then degraded further into small acid-soluble oligonucleotides. The protein is Exodeoxyribonuclease 7 small subunit of Bdellovibrio bacteriovorus (strain ATCC 15356 / DSM 50701 / NCIMB 9529 / HD100).